The chain runs to 159 residues: 3-hydroxyacyl-[acyl-carrier-protein] dehydratase FabZ (159 aa).

Histidine 65 is an active-site residue.

It belongs to the thioester dehydratase family. FabZ subfamily.

The protein localises to the cytoplasm. The enzyme catalyses a (3R)-hydroxyacyl-[ACP] = a (2E)-enoyl-[ACP] + H2O. Involved in unsaturated fatty acids biosynthesis. Catalyzes the dehydration of short chain beta-hydroxyacyl-ACPs and long chain saturated and unsaturated beta-hydroxyacyl-ACPs. This Microcystis aeruginosa (strain NIES-843 / IAM M-2473) protein is 3-hydroxyacyl-[acyl-carrier-protein] dehydratase FabZ.